The following is a 501-amino-acid chain: MGCARWLALGGLLALAGLLQARLLLPQQAGFGECDRFFYKGTPPAGLATEAHVRICQRFAGSERFATLYSPGHRIPVFSAFRAARPASRSAEQRGLLEPQIDDPDSNLEEVIDEANALTSVDNLGSKQALNADYIDSDYEIGQLYPFPLNSDLQMATFPLTNSVPMTQSFRERWHMNLNSLMDRALIPHCSEGKDLYILTGAVPSEHRVKGKVTIPEFVWLAACCAVPGEGWAMGFIKHTQDIDVIEDVMLRDLEKLLPHKPQLFQDNCGEMEQDTEKMKKILEVVNQVQDEERSLQSQERMSPLASTQSQRSALLSPEAPPEGGSSFLGQVLGFLATPFIKLFQLIYYLVTAVLRNIVHLLWLVAKQAINTVESCLYHLGEATVSYLVAIGQELVSIPWKVLKVVAKVIRAFLRILCCLLKAVCRALSIPLRVLVDVATFPVYTVGAIPIVCKDIAVGLGGTLSLLFDTAFGTVGGLFQIVFSVFKRIGYKVTLDNSGEF.

The first 21 residues, 1 to 21, serve as a signal peptide directing secretion; that stretch reads MGCARWLALGGLLALAGLLQA. Residue lysine 408 is modified to N6-acetyllysine.

It belongs to the DNA/RNA non-specific endonuclease family. As to quaternary structure, interacts with RNF26; this interaction is important to modulate innate immune signaling through the cGAS-STING pathway.

The protein resides in the secreted. Its function is as follows. May act as a DNase and a RNase. Plays a role in the modulation of innate immune signaling through the cGAS-STING pathway by interacting with RNF26. The chain is Endonuclease domain-containing 1 protein (Endod1) from Mus musculus (Mouse).